The chain runs to 371 residues: Protein MxiG (371 aa).

Residues 127–141 traverse the membrane as a helical segment; it reads VFFFFAVIVVLIIIF.

The protein localises to the cell inner membrane. Its subcellular location is the cell outer membrane. Involved in the secretion of the Ipa antigens. Involved in the intracellular dissemination of Shigella. Part of the Mxi-Spa secretion apparatus. The protein is Protein MxiG (mxiG) of Shigella flexneri.